Reading from the N-terminus, the 1794-residue chain is Protein TIC 214 (1794 aa).

6 consecutive transmembrane segments (helical) span residues 19 to 39 (IINS…FSIG), 68 to 88 (FIAG…HLAL), 91 to 111 (PHTI…WNNH), 133 to 153 (VFLN…SSML), 176 to 196 (VGWL…LVWI), and 227 to 247 (IFSI…PSPI).

Belongs to the TIC214 family. Part of the Tic complex.

It is found in the plastid. The protein localises to the chloroplast inner membrane. Involved in protein precursor import into chloroplasts. May be part of an intermediate translocation complex acting as a protein-conducting channel at the inner envelope. The protein is Protein TIC 214 of Olimarabidopsis pumila (Dwarf rocket).